A 616-amino-acid chain; its full sequence is Chaperone protein HscA (616 aa).

Belongs to the heat shock protein 70 family.

In terms of biological role, chaperone involved in the maturation of iron-sulfur cluster-containing proteins. Has a low intrinsic ATPase activity which is markedly stimulated by HscB. Involved in the maturation of IscU. In Salmonella paratyphi C (strain RKS4594), this protein is Chaperone protein HscA.